A 279-amino-acid polypeptide reads, in one-letter code: Shikimate dehydrogenase (NADP(+)) (279 aa).

Shikimate is bound by residues 20-22 and Thr67; that span reads SRS. Lys71 (proton acceptor) is an active-site residue. Asp83 lines the NADP(+) pocket. Shikimate-binding residues include Asn92 and Asp108. NADP(+)-binding positions include 134 to 138 and Leu223; that span reads GAGGA. Position 225 (Tyr225) interacts with shikimate. Residue Gly246 coordinates NADP(+).

The protein belongs to the shikimate dehydrogenase family. Homodimer.

The enzyme catalyses shikimate + NADP(+) = 3-dehydroshikimate + NADPH + H(+). It functions in the pathway metabolic intermediate biosynthesis; chorismate biosynthesis; chorismate from D-erythrose 4-phosphate and phosphoenolpyruvate: step 4/7. Its function is as follows. Involved in the biosynthesis of the chorismate, which leads to the biosynthesis of aromatic amino acids. Catalyzes the reversible NADPH linked reduction of 3-dehydroshikimate (DHSA) to yield shikimate (SA). This is Shikimate dehydrogenase (NADP(+)) from Cereibacter sphaeroides (strain ATCC 17023 / DSM 158 / JCM 6121 / CCUG 31486 / LMG 2827 / NBRC 12203 / NCIMB 8253 / ATH 2.4.1.) (Rhodobacter sphaeroides).